The chain runs to 62 residues: Large ribosomal subunit protein bL28 (62 aa).

It belongs to the bacterial ribosomal protein bL28 family.

The polypeptide is Large ribosomal subunit protein bL28 (Caldanaerobacter subterraneus subsp. tengcongensis (strain DSM 15242 / JCM 11007 / NBRC 100824 / MB4) (Thermoanaerobacter tengcongensis)).